The following is a 562-amino-acid chain: Arginine--tRNA ligase (562 aa).

Positions 129-139 (ANPTGPLHVGH) match the 'HIGH' region motif.

Belongs to the class-I aminoacyl-tRNA synthetase family. As to quaternary structure, monomer.

Its subcellular location is the cytoplasm. It carries out the reaction tRNA(Arg) + L-arginine + ATP = L-arginyl-tRNA(Arg) + AMP + diphosphate. This is Arginine--tRNA ligase from Xanthomonas axonopodis pv. citri (strain 306).